The following is a 245-amino-acid chain: Homeobox protein Hox-A4a (245 aa).

The interval 34-99 (DYYERPKDPG…HGPRLTTESC (66 aa)) is disordered. A compositionally biased stretch (basic and acidic residues) spans 35 to 51 (YYERPKDPGFPHHEEAS). Polar residues-rich tracts occupy residues 53 to 73 (PRSNYQEQSYDYGNVSTNDLN) and 82 to 99 (QPQSVSQNHGPRLTTESC). An Antp-type hexapeptide motif is present at residues 126–131 (VYPWMK). A DNA-binding region (homeobox) is located at residues 147–206 (PKRSRTAYTRQQALELEKEFHFNRYLTRRRRVEIAHTMCLSERQVKIWFQNRRMKWKKDH). Residues 205–245 (DHKLPNTKIRSSSSAPSNHHVKTDATQQQQTLLPTPCSSNL) form a disordered region. Residues 212–221 (KIRSSSSAPS) show a composition bias toward polar residues. Low complexity predominate over residues 230-245 (TQQQQTLLPTPCSSNL).

The protein belongs to the Antp homeobox family. Deformed subfamily.

The protein resides in the nucleus. Its function is as follows. Sequence-specific transcription factor which is part of a developmental regulatory system that provides cells with specific positional identities on the anterior-posterior axis. This is Homeobox protein Hox-A4a (hoxa4a) from Danio rerio (Zebrafish).